The following is a 310-amino-acid chain: 4-hydroxyproline 2-epimerase (310 aa).

Residue Cys-88 is the Proton acceptor of the active site. Substrate-binding positions include 89 to 90 (GH), His-208, and Asp-232. Cys-236 (proton donor) is an active-site residue. 237–238 (GT) is a substrate binding site.

This sequence belongs to the proline racemase family.

It catalyses the reaction trans-4-hydroxy-L-proline = cis-4-hydroxy-D-proline. In terms of biological role, catalyzes the epimerization of trans-4-hydroxy-L-proline (t4LHyp) to cis-4-hydroxy-D-proline (c4DHyp). Is likely involved in a degradation pathway that converts t4LHyp to alpha-ketoglutarate. Displays no proline racemase activity. This Pseudomonas fluorescens (strain ATCC BAA-477 / NRRL B-23932 / Pf-5) protein is 4-hydroxyproline 2-epimerase.